Here is a 212-residue protein sequence, read N- to C-terminus: External core antigen (212 aa).

A signal peptide spans 1–19 (MQLFHLCLIISCSCPTVQA). Residues 25-27 (GWL) form an HBEAG region. The tract at residues 165–212 (NAPILSTLPETTVVRRRGRSPRRRTPSPRRRRSQSPRRRRSQSRESQC) is disordered. The span at 178–205 (VRRRGRSPRRRTPSPRRRRSQSPRRRRS) shows a compositional bias: basic residues. One copy of the 1; half-length repeat lies at 184 to 190 (SPRRRTP). The interval 184 to 206 (SPRRRTPSPRRRRSQSPRRRRSQ) is 3 X 8 AA repeats of S-P-R-R-R-R-S-Q. The propeptide occupies 184-212 (SPRRRTPSPRRRRSQSPRRRRSQSRESQC). A run of 2 repeats spans residues 191–198 (SPRRRRSQ) and 199–206 (SPRRRRSQ).

It belongs to the orthohepadnavirus precore antigen family. In terms of assembly, homodimerizes. Post-translationally, phosphorylated. Cleaved by host furin.

It localises to the secreted. It is found in the host nucleus. Functionally, may regulate immune response to the intracellular capsid in acting as a T-cell tolerogen, by having an immunoregulatory effect which prevents destruction of infected cells by cytotoxic T-cells. This immune regulation may predispose to chronicity during perinatal infections and prevent severe liver injury during adult infections. This Hepatitis B virus genotype C subtype ayw (isolate China/Tibet127/2002) (HBV-C) protein is External core antigen.